The primary structure comprises 301 residues: Protease HtpX (301 aa).

Transmembrane regions (helical) follow at residues 4-24 (IGLFLLTNLAILVVLGVVLFI) and 44-64 (TGLLIIAAVIGFGGSFISLAM). Residue His-150 participates in Zn(2+) binding. Residue Glu-151 is part of the active site. His-154 contributes to the Zn(2+) binding site. 2 consecutive transmembrane segments (helical) span residues 165 to 185 (LIQGVVNTFVVFFSRIIGHFV) and 201 to 221 (FITSIFAQIVLGILASVIVMW). Glu-227 lines the Zn(2+) pocket.

Belongs to the peptidase M48B family. Zn(2+) is required as a cofactor.

It localises to the cell inner membrane. The sequence is that of Protease HtpX from Alkalilimnicola ehrlichii (strain ATCC BAA-1101 / DSM 17681 / MLHE-1).